We begin with the raw amino-acid sequence, 173 residues long: RNA polymerase sigma factor TcsR (173 aa).

The tract at residues I122–K169 is sigma-70 factor domain-4. A DNA-binding region (H-T-H motif) is located at residues E143–L162.

It belongs to the sigma-70 factor family.

In terms of biological role, sigma factors are initiation factors that promote the attachment of RNA polymerase to specific initiation sites and are then released. Transcriptional regulator specifically required to activate expression of the toxin gene locus, composed of tcsL, tcsH and tcdE/utxA. This is RNA polymerase sigma factor TcsR from Paraclostridium sordellii (Clostridium sordellii).